The following is an 81-amino-acid chain: Small ribosomal subunit protein bS18 (81 aa).

This sequence belongs to the bacterial ribosomal protein bS18 family. Part of the 30S ribosomal subunit. Forms a tight heterodimer with protein bS6.

Functionally, binds as a heterodimer with protein bS6 to the central domain of the 16S rRNA, where it helps stabilize the platform of the 30S subunit. The protein is Small ribosomal subunit protein bS18 of Leptospira borgpetersenii serovar Hardjo-bovis (strain JB197).